The following is a 369-amino-acid chain: 3-dehydroquinate synthase (369 aa).

Residues 72–77 (SGEKEK), 130–131 (TT), lysine 142, and lysine 151 each bind NAD(+). 3 residues coordinate Zn(2+): glutamate 184, histidine 247, and histidine 264.

This sequence belongs to the sugar phosphate cyclases superfamily. Dehydroquinate synthase family. Co(2+) serves as cofactor. Requires Zn(2+) as cofactor. NAD(+) is required as a cofactor.

It is found in the cytoplasm. The catalysed reaction is 7-phospho-2-dehydro-3-deoxy-D-arabino-heptonate = 3-dehydroquinate + phosphate. The protein operates within metabolic intermediate biosynthesis; chorismate biosynthesis; chorismate from D-erythrose 4-phosphate and phosphoenolpyruvate: step 2/7. Its function is as follows. Catalyzes the conversion of 3-deoxy-D-arabino-heptulosonate 7-phosphate (DAHP) to dehydroquinate (DHQ). The sequence is that of 3-dehydroquinate synthase from Bacillus cytotoxicus (strain DSM 22905 / CIP 110041 / 391-98 / NVH 391-98).